The sequence spans 238 residues: Tyrosine recombinase XerD-like (238 aa).

A Core-binding (CB) domain is found at 1–75; sequence MKLPNEIDEY…SANQYLLFLY (75 aa). The Tyr recombinase domain occupies 90–238; it reads VQKKSQTAQS…TITTLEKYYR (149 aa). Residues Lys-154 and Arg-204 contribute to the active site. Tyr-236 serves as the catalytic O-(3'-phospho-DNA)-tyrosine intermediate.

This sequence belongs to the 'phage' integrase family. XerD-like subfamily.

It is found in the cytoplasm. Functionally, putative tyrosine recombinase. Not involved in the cutting and rejoining of the recombining DNA molecules on dif(SL) site. This is Tyrosine recombinase XerD-like (ynbA) from Lactococcus lactis subsp. lactis (strain IL1403) (Streptococcus lactis).